A 530-amino-acid polypeptide reads, in one-letter code: Structure-specific endonuclease subunit SLX1 homolog 2 (530 aa).

The GIY-YIG domain maps to 4–89 (RFHCVYLLTS…PTKSTRLKTQ (86 aa)). Residues 232–365 (CALCSLPLRS…PSQPCPCPLC (134 aa)) form an SLX1-type zinc finger. Disordered regions lie at residues 276–306 (ATMGQSTRNERSGEYSNKIKDDSNDGTMDAH), 410–438 (NSSLTERKSRRKAKPALGQKRNRGEYCGD), and 474–502 (LPPSGDEGYACDSSRRGVGGSKHTTRMTD). The segment covering 283-298 (RNERSGEYSNKIKDDS) has biased composition (basic and acidic residues).

Belongs to the SLX1 family. Forms a heterodimer with a member of the SLX4 family. The cofactor is a divalent metal cation.

It localises to the nucleus. Its function is as follows. Catalytic subunit of a heterodimeric structure-specific endonuclease that resolves DNA secondary structures generated during DNA repair and recombination. Has endonuclease activity towards branched DNA substrates, introducing single-strand cuts in duplex DNA close to junctions with ss-DNA. The protein is Structure-specific endonuclease subunit SLX1 homolog 2 of Trypanosoma cruzi (strain CL Brener).